The sequence spans 168 residues: ATP synthase F(1) complex subunit delta, mitochondrial (168 aa).

Residues 1-22 (MLPASLLRHPGLRRLMLQARTY) constitute a mitochondrion transit peptide. N6-acetyllysine; alternate occurs at positions 136 and 165. Residues K136 and K165 each carry the N6-succinyllysine; alternate modification.

This sequence belongs to the ATPase epsilon chain family. Component of the ATP synthase complex composed at least of ATP5F1A/subunit alpha, ATP5F1B/subunit beta, ATP5MC1/subunit c (homooctomer), MT-ATP6/subunit a, MT-ATP8/subunit 8, ATP5ME/subunit e, ATP5MF/subunit f, ATP5MG/subunit g, ATP5MK/subunit k, ATP5MJ/subunit j, ATP5F1C/subunit gamma, ATP5F1D/subunit delta, ATP5F1E/subunit epsilon, ATP5PF/subunit F6, ATP5PB/subunit b, ATP5PD/subunit d, ATP5PO/subunit OSCP. ATP synthase complex consists of a soluble F(1) head domain (subunits alpha(3) and beta(3)) - the catalytic core - and a membrane F(0) domain - the membrane proton channel (subunits c, a, 8, e, f, g, k and j). These two domains are linked by a central stalk (subunits gamma, delta, and epsilon) rotating inside the F1 region and a stationary peripheral stalk (subunits F6, b, d, and OSCP). Component of a complex composed at least by ATPIF1, ATP5F1A, ATP5F1B, ATP5F1C AND ATP5F1E.

The protein resides in the mitochondrion. The protein localises to the mitochondrion inner membrane. Subunit delta, of the mitochondrial membrane ATP synthase complex (F(1)F(0) ATP synthase or Complex V) that produces ATP from ADP in the presence of a proton gradient across the membrane which is generated by electron transport complexes of the respiratory chain. ATP synthase complex consist of a soluble F(1) head domain - the catalytic core - and a membrane F(1) domain - the membrane proton channel. These two domains are linked by a central stalk rotating inside the F(1) region and a stationary peripheral stalk. During catalysis, ATP synthesis in the catalytic domain of F(1) is coupled via a rotary mechanism of the central stalk subunits to proton translocation. In vivo, can only synthesize ATP although its ATP hydrolase activity can be activated artificially in vitro. With the central stalk subunit gamma, is essential for the biogenesis of F(1) catalytic part of the ATP synthase complex namely in the formation of F1 assembly intermediate. This chain is ATP synthase F(1) complex subunit delta, mitochondrial, found in Mus musculus (Mouse).